A 1456-amino-acid polypeptide reads, in one-letter code: Putative 1-phosphatidylinositol-3-phosphate 5-kinase FAB1D (1456 aa).

The span at 1 to 19 shows a compositional bias: low complexity; the sequence is MTPSNSLSSSERSLSGECS. Disordered stretches follow at residues 1–110, 533–592, 925–944, 967–987, 1003–1022, and 1137–1159; these read MTPS…EVDG, PVSV…NDIE, ENDNKVSDSGSNGGIDTPLV, VPEDNESQTLCSSSPDTTSPI, NGQEADKSIPVTGESLDDEV, and NNQDSKQTDRDVSRFSSESTNRL. Residues 43–57 show a composition bias toward basic and acidic residues; it reads ELTKEVKVDRLERKS. Residues 86-110 show a composition bias toward acidic residues; that stretch reads REDDSDDVPVWEPPEPENPEDEVDG. Low complexity predominate over residues 533-544; sequence PVSVDTDVSTTS. A compositionally biased stretch (polar residues) spans 973–987; the sequence is SQTLCSSSPDTTSPI. The PIPK domain occupies 1115–1443; sequence NNEESKKPLS…RFRKFMKTHF (329 aa). The span at 1150 to 1159 shows a compositional bias: polar residues; sequence RFSSESTNRL.

In terms of assembly, component of the PI(3,5)P2 regulatory complex at least composed of ATG18, SAC/FIG4, FAB1 and VAC14. Mg(2+) is required as a cofactor. Mn(2+) serves as cofactor.

The catalysed reaction is a 1,2-diacyl-sn-glycero-3-phospho-(1D-myo-inositol-3-phosphate) + ATP = a 1,2-diacyl-sn-glycero-3-phospho-(1D-myo-inositol-3,5-bisphosphate) + ADP + H(+). Functionally, the PI(3,5)P2 regulatory complex regulates both the synthesis and turnover of phosphatidylinositol 3,5-bisphosphate (PtdIns(3,5)P2). Catalyzes the phosphorylation of phosphatidylinositol 3-phosphate on the fifth hydroxyl of the myo-inositol ring, to form phosphatidylinositol 3,5-bisphosphate. This chain is Putative 1-phosphatidylinositol-3-phosphate 5-kinase FAB1D (FAB1D), found in Arabidopsis thaliana (Mouse-ear cress).